We begin with the raw amino-acid sequence, 646 residues long: Lipoteichoic acid synthase (646 aa).

The Cytoplasmic portion of the chain corresponds to 1-7; sequence MSSQKKK. A helical transmembrane segment spans residues 8-28; sequence ISLFAFFLLTVITITLKTYFS. The Extracellular portion of the chain corresponds to 29-43; the sequence is YYVDFSLGVKGLVQN. The helical transmembrane segment at 44-64 threads the bilayer; that stretch reads LILLMNPYSLVALVLSVFLFF. Residues 65–68 lie on the Cytoplasmic side of the membrane; it reads KGKK. The helical transmembrane segment at 69-89 threads the bilayer; the sequence is AFWFMFIGGFLLTFLLYANVV. Topologically, residues 90–119 are extracellular; sequence YFRFFSDFLTFSTLNQVGNVESMGGAVSAS. A helical transmembrane segment spans residues 120 to 140; that stretch reads FKWYDFVYFIDTLVYLFILIF. Residues 141–153 lie on the Cytoplasmic side of the membrane; that stretch reads KTKWLDTKAFSKK. A helical membrane pass occupies residues 154–174; that stretch reads FVPVVMAASVALFFLNLAFAE. Residues 175 to 646 lie on the Extracellular side of the membrane; that stretch reads TDRPELLTRT…ETGPKANSKK (472 aa). Residues Glu255 and Thr300 each contribute to the Mn(2+) site. Residue Thr300 is part of the active site. His416 is a binding site for substrate. Residues Asp475 and His476 each coordinate Mn(2+). Positions 623-638 are enriched in basic and acidic residues; it reads NPDFKKVNPSKYKYET. The interval 623 to 646 is disordered; that stretch reads NPDFKKVNPSKYKYETGPKANSKK.

The protein belongs to the LTA synthase family. Proteolytically cleaved.

Its subcellular location is the cell membrane. The protein resides in the secreted. Its pathway is cell wall biogenesis; lipoteichoic acid biosynthesis. Its function is as follows. Catalyzes the polymerization of lipoteichoic acid (LTA) polyglycerol phosphate, a reaction that presumably uses phosphatidylglycerol (PG) as substrate. Is required for staphylococcal growth and cell division process. The protein is Lipoteichoic acid synthase (ltaS) of Staphylococcus aureus (strain USA300).